The sequence spans 848 residues: Adenylate cyclase (848 aa).

Positions 1-535 are catalytic; the sequence is MYLYIETLKQ…DISHHFPLRL (535 aa). The segment at 541–848 is regulatory; sequence KALYSPCEIR…SQPAQQFQLH (308 aa).

It belongs to the adenylyl cyclase class-1 family.

The protein resides in the cytoplasm. The catalysed reaction is ATP = 3',5'-cyclic AMP + diphosphate. Its activity is regulated as follows. The regulatory domain is involved in the regulation of cyclase activity by the carbon source. The protein is Adenylate cyclase (cya) of Yersinia intermedia.